A 461-amino-acid polypeptide reads, in one-letter code: Bifunctional protein GlmU (461 aa).

Residues 1–229 (MEKYVVVLAA…FSESLGVNDR (229 aa)) are pyrophosphorylase. Residues 8–11 (LAAG), Lys22, Gln72, and 77–78 (GT) contribute to the UDP-N-acetyl-alpha-D-glucosamine site. Position 102 (Asp102) interacts with Mg(2+). Residues Gly139, Glu154, Asn169, and Asn227 each contribute to the UDP-N-acetyl-alpha-D-glucosamine site. Position 227 (Asn227) interacts with Mg(2+). The interval 230-250 (VALAQATKTMQRRINEAHMRD) is linker. The N-acetyltransferase stretch occupies residues 251 to 461 (GVSFIDPDTA…LPLSKDKDWE (211 aa)). The UDP-N-acetyl-alpha-D-glucosamine site is built by Arg332 and Lys350. Catalysis depends on His362, which acts as the Proton acceptor. The UDP-N-acetyl-alpha-D-glucosamine site is built by Tyr365 and Asn376. Acetyl-CoA is bound by residues 385–386 (NY), Ala422, and Arg439.

In the N-terminal section; belongs to the N-acetylglucosamine-1-phosphate uridyltransferase family. It in the C-terminal section; belongs to the transferase hexapeptide repeat family. As to quaternary structure, homotrimer. Mg(2+) serves as cofactor.

The protein resides in the cytoplasm. It catalyses the reaction alpha-D-glucosamine 1-phosphate + acetyl-CoA = N-acetyl-alpha-D-glucosamine 1-phosphate + CoA + H(+). The catalysed reaction is N-acetyl-alpha-D-glucosamine 1-phosphate + UTP + H(+) = UDP-N-acetyl-alpha-D-glucosamine + diphosphate. The protein operates within nucleotide-sugar biosynthesis; UDP-N-acetyl-alpha-D-glucosamine biosynthesis; N-acetyl-alpha-D-glucosamine 1-phosphate from alpha-D-glucosamine 6-phosphate (route II): step 2/2. Its pathway is nucleotide-sugar biosynthesis; UDP-N-acetyl-alpha-D-glucosamine biosynthesis; UDP-N-acetyl-alpha-D-glucosamine from N-acetyl-alpha-D-glucosamine 1-phosphate: step 1/1. It participates in bacterial outer membrane biogenesis; LPS lipid A biosynthesis. Functionally, catalyzes the last two sequential reactions in the de novo biosynthetic pathway for UDP-N-acetylglucosamine (UDP-GlcNAc). The C-terminal domain catalyzes the transfer of acetyl group from acetyl coenzyme A to glucosamine-1-phosphate (GlcN-1-P) to produce N-acetylglucosamine-1-phosphate (GlcNAc-1-P), which is converted into UDP-GlcNAc by the transfer of uridine 5-monophosphate (from uridine 5-triphosphate), a reaction catalyzed by the N-terminal domain. This Lactobacillus helveticus (strain DPC 4571) protein is Bifunctional protein GlmU.